Consider the following 155-residue polypeptide: UPF0305 protein MTH_811 (155 aa).

It belongs to the UPF0305 family.

This is UPF0305 protein MTH_811 from Methanothermobacter thermautotrophicus (strain ATCC 29096 / DSM 1053 / JCM 10044 / NBRC 100330 / Delta H) (Methanobacterium thermoautotrophicum).